The primary structure comprises 188 residues: Large ribosomal subunit protein eL18 (188 aa).

The tract at residues 153-188 (GKAPGTPHSHTKPYVRSKGRKFERARGRRASCGYKN) is disordered. The segment covering 161–171 (SHTKPYVRSKG) has biased composition (basic residues).

It belongs to the eukaryotic ribosomal protein eL18 family. In terms of assembly, component of the large ribosomal subunit.

It is found in the cytoplasm. The protein localises to the cytosol. Its subcellular location is the rough endoplasmic reticulum. Its function is as follows. Component of the large ribosomal subunit. The ribosome is a large ribonucleoprotein complex responsible for the synthesis of proteins in the cell. The chain is Large ribosomal subunit protein eL18 (rpl18) from Oreochromis mossambicus (Mozambique tilapia).